The chain runs to 347 residues: Sulfate/thiosulfate import ATP-binding protein CysA 1 (347 aa).

The ABC transporter domain occupies 3–237; that stretch reads VRVESLRKEF…PVSPFVYGFI (235 aa). 35–42 is an ATP binding site; that stretch reads GPSGSGKT.

Belongs to the ABC transporter superfamily. Sulfate/tungstate importer (TC 3.A.1.6) family. As to quaternary structure, the complex is composed of two ATP-binding proteins (CysA), two transmembrane proteins (CysT and CysW) and a solute-binding protein (CysP).

Its subcellular location is the cell inner membrane. The enzyme catalyses sulfate(out) + ATP + H2O = sulfate(in) + ADP + phosphate + H(+). The catalysed reaction is thiosulfate(out) + ATP + H2O = thiosulfate(in) + ADP + phosphate + H(+). Functionally, part of the ABC transporter complex CysAWTP involved in sulfate/thiosulfate import. Responsible for energy coupling to the transport system. The protein is Sulfate/thiosulfate import ATP-binding protein CysA 1 of Rhizobium meliloti (strain 1021) (Ensifer meliloti).